We begin with the raw amino-acid sequence, 452 residues long: MAASSGRSQSSLHRKGLMAADRRSRILAVCGMHPDHQETLKKNRVVLAKQLLLSELLEHLLEKDIITLEMRELIQAKGGSFSQNVELLNLLPKRGPQAFDAFCEALRETRQGHLEDLLLTTLSDIQHILPPLSCDYDSSLPFSVCESCPPHKQSRLSTDTMEHSLDNGDGPPCLQVKPCTPEFYQAHYQLAYRLQSQPRGLALVMSNVHFTGEKDLEFRSGGDVDHTTLVTLFKLLGYNVHVLYDQTAQEMQEKLQNFAQLPAHRVTDSCIVALLSHGVEGGIYGVDGKLLQLQEVFRLFDNANCPSLQNKPKMFFIQACRGDETDRGVDQQDGKNHAQSPGCEESDAGKEELMKMRLPTRSDMICGYACLKGNAAMRNTKRGSWYIEALTQVFSERACDMHVADMLVKVNALIKEREGYAPGTEFHRCKEMSEYCSTLCQQLYLFPGYPPT.

Residue Ala2 is modified to N-acetylalanine. Positions 2–169 (AASSGRSQSS…TMEHSLDNGD (168 aa)) are excised as a propeptide. The CARD domain occupies 32-121 (MHPDHQETLK…GHLEDLLLTT (90 aa)). Phosphoserine is present on Ser157. Residues His277 and Cys320 contribute to the active site. Residues 326 to 333 (DRGVDQQD) constitute a propeptide that is removed on maturation. A compositionally biased stretch (basic and acidic residues) spans 327–336 (RGVDQQDGKN). A disordered region spans residues 327-349 (RGVDQQDGKNHAQSPGCEESDAG). Ser340 is modified (phosphoserine).

The protein belongs to the peptidase C14A family. As to quaternary structure, heterotetramer that consists of two anti-parallel arranged heterodimers, each one formed by a p18 subunit and a p12 subunit. Forms a complex named the PIDDosome with PIDD1 and CRADD. Interacts with NOL3 (via CARD domain); inhibits CASP2 activity in a phosphorylation-dependent manner. Post-translationally, the mature protease can process its own propeptide, but not that of other caspases.

It catalyses the reaction Strict requirement for an Asp residue at P1, with 316-Asp being essential for proteolytic activity and has a preferred cleavage sequence of Val-Asp-Val-Ala-Asp-|-.. Involved in the activation cascade of caspases responsible for apoptosis execution. Might function by either activating some proteins required for cell death or inactivating proteins necessary for cell survival. Associates with PIDD1 and CRADD to form the PIDDosome, a complex that activates CASP2 and triggers apoptosis in response to genotoxic stress. The protein is Caspase-2 (Casp2) of Rattus norvegicus (Rat).